A 271-amino-acid chain; its full sequence is tRNA pseudouridine synthase A (271 aa).

The active-site Nucleophile is D54. Residue Y112 participates in substrate binding.

The protein belongs to the tRNA pseudouridine synthase TruA family. As to quaternary structure, homodimer.

The enzyme catalyses uridine(38/39/40) in tRNA = pseudouridine(38/39/40) in tRNA. In terms of biological role, formation of pseudouridine at positions 38, 39 and 40 in the anticodon stem and loop of transfer RNAs. The polypeptide is tRNA pseudouridine synthase A (Acinetobacter baylyi (strain ATCC 33305 / BD413 / ADP1)).